The sequence spans 391 residues: Putative glutamate--cysteine ligase 2-2 (391 aa).

The protein belongs to the glutamate--cysteine ligase type 2 family. YbdK subfamily.

The enzyme catalyses L-cysteine + L-glutamate + ATP = gamma-L-glutamyl-L-cysteine + ADP + phosphate + H(+). Functionally, ATP-dependent carboxylate-amine ligase which exhibits weak glutamate--cysteine ligase activity. In Saccharopolyspora erythraea (strain ATCC 11635 / DSM 40517 / JCM 4748 / NBRC 13426 / NCIMB 8594 / NRRL 2338), this protein is Putative glutamate--cysteine ligase 2-2.